The following is a 782-amino-acid chain: MDEDEIELTPEEEKSFFDGIGADAVHMDSDQIVVEVQETVFLANSDVTVHNFVPDNPGSVIIQDVIENVLIEDVHCSHILEETDISDNVIIPEQVLNLGTAEEVSLAQFLIPDILTSGITSTSLTMPEHVLMSEAIHVSDVGHFEQVIHDSLVETEVITDPITADTSDILVADCVSEAVLDSSGMPLEQQDNDKINCEDYLMMSLDEPSKADLEGSSEVTMNAESGTDSSKLDEASPEVIKVCILKADSEVDELGETIHAVESETKNGNEAEVTDQSTSIRVPRVNIYMSASDSQKEEEDTEVIVGDEDAGGTAADTPEHEQQMDVSEIKAAFLPIAWTAAYDNNSDEIEDQNVTASALLNQDESGGLDRVPKQKSKKKKRPESKQYQSAIFVAPDGQTLRVYPCMFCGKKFKTKRFLKRHTKNHPEYLANKKYHCTECDYSTNKKISLHNHMESHKLTIKTEKTTECDDCRKNLSHAGTLCTHKTMHTEKGVNKTCKCKFCDYETAEQTLLNHHLLVVHRKKFPHICGECGKGFRHPSALKKHIRVHTGEKPYECQYCEYKSADSSNLKTHIKSKHSKEIPLKCGICLLTFSDNKEAQQHAVLHQESRTHQCSHCNHKSSNSSDLKRHIISVHTKAYPHKCDMCSKGFHRPSELKKHVATHKSKKMHQCRHCDFNSPDPFLLSHHILSAHTKNVPFKCKRCKKEFQQQCELQTHMKTHSSRKVYQCEYCEYSTKDASGFKRHVISIHTKDYPHSCDFCKKGFRRPSEKNQHIMRHHKVGLP.

2 disordered regions span residues 211-233 and 360-386; these read ADLE…SKLD and LNQD…ESKQ. Over residues 217-229 the composition is skewed to polar residues; it reads SEVTMNAESGTDS. The Nuclear localization signal motif lies at 372–382; sequence PKQKSKKKKRP. A compositionally biased stretch (basic residues) spans 373-382; it reads KQKSKKKKRP. C2H2-type zinc fingers lie at residues 403 to 425, 434 to 456, 466 to 488, 497 to 520, 526 to 548, 554 to 577, 583 to 605, 611 to 634, 640 to 662, 668 to 691, 697 to 719, 725 to 748, and 754 to 777; these read YPCM…TKNH, YHCT…MESH, TECD…KTMH, CKCK…LVVH, HICG…IRVH, YECQ…KSKH, LKCG…AVLH, HQCS…ISVH, HKCD…VATH, HQCR…LSAH, FKCK…MKTH, YQCE…ISIH, and HSCD…MRHH.

This sequence belongs to the krueppel C2H2-type zinc-finger protein family. ZFX/ZFY subfamily.

It is found in the nucleus. Probable transcriptional activator. Binds to the consensus sequence 5'-AGGCCY-3'. The protein is Zinc finger Y-chromosomal protein 1 (Zfy1) of Mus musculus (Mouse).